Consider the following 267-residue polypeptide: Sepiapterin reductase (267 aa).

Position 1 is an N-acetylmethionine (M1). 20-26 (GASRGFG) lines the NADP(+) pocket. Position 38 is a phosphoserine (S38). Residues 48 to 49 (RN) and 75 to 76 (DL) each bind NADP(+). Substrate-binding positions include 163–164 (SI) and Y176. K180 is an NADP(+) binding site. Position 201 is a phosphoserine (S201). G205 lines the substrate pocket. An NADP(+)-binding site is contributed by 207–212 (LDTDMQ). At S219 the chain carries Phosphoserine. Residue D263 participates in substrate binding.

It belongs to the sepiapterin reductase family. In terms of assembly, homodimer.

It is found in the cytoplasm. It catalyses the reaction L-erythro-7,8-dihydrobiopterin + NADP(+) = L-sepiapterin + NADPH + H(+). The enzyme catalyses (6R)-L-erythro-5,6,7,8-tetrahydrobiopterin + 2 NADP(+) = 6-pyruvoyl-5,6,7,8-tetrahydropterin + 2 NADPH + 2 H(+). Its function is as follows. Catalyzes the final one or two reductions in tetra-hydrobiopterin biosynthesis to form 5,6,7,8-tetrahydrobiopterin. This chain is Sepiapterin reductase (SPR), found in Bos taurus (Bovine).